A 455-amino-acid chain; its full sequence is Bifunctional protein GlmU (455 aa).

A pyrophosphorylase region spans residues 1–232; the sequence is MASITGALIL…DPNLLGVNDP (232 aa). UDP-N-acetyl-alpha-D-glucosamine-binding positions include 10 to 13, Lys-24, Gln-75, and 80 to 81; these read LAAG and GT. Asp-106 contributes to the Mg(2+) binding site. Residues Gly-141, Glu-155, Asn-172, and Asn-230 each coordinate UDP-N-acetyl-alpha-D-glucosamine. Position 230 (Asn-230) interacts with Mg(2+). The tract at residues 233-253 is linker; the sequence is AELIRSEALVRARIALNWIEK. The interval 254-455 is N-acetyltransferase; that stretch reads RVLIHAPETV…QTTLPRRRNS (202 aa). Residues Arg-336 and Lys-354 each contribute to the UDP-N-acetyl-alpha-D-glucosamine site. His-366 serves as the catalytic Proton acceptor. UDP-N-acetyl-alpha-D-glucosamine contacts are provided by Tyr-369 and Asn-380. Acetyl-CoA is bound by residues Ala-383, 389 to 390, Ser-408, Ala-426, and Arg-443; that span reads NY.

The protein in the N-terminal section; belongs to the N-acetylglucosamine-1-phosphate uridyltransferase family. This sequence in the C-terminal section; belongs to the transferase hexapeptide repeat family. Homotrimer. The cofactor is Mg(2+).

Its subcellular location is the cytoplasm. The enzyme catalyses alpha-D-glucosamine 1-phosphate + acetyl-CoA = N-acetyl-alpha-D-glucosamine 1-phosphate + CoA + H(+). The catalysed reaction is N-acetyl-alpha-D-glucosamine 1-phosphate + UTP + H(+) = UDP-N-acetyl-alpha-D-glucosamine + diphosphate. It participates in nucleotide-sugar biosynthesis; UDP-N-acetyl-alpha-D-glucosamine biosynthesis; N-acetyl-alpha-D-glucosamine 1-phosphate from alpha-D-glucosamine 6-phosphate (route II): step 2/2. It functions in the pathway nucleotide-sugar biosynthesis; UDP-N-acetyl-alpha-D-glucosamine biosynthesis; UDP-N-acetyl-alpha-D-glucosamine from N-acetyl-alpha-D-glucosamine 1-phosphate: step 1/1. Its pathway is bacterial outer membrane biogenesis; LPS lipid A biosynthesis. Functionally, catalyzes the last two sequential reactions in the de novo biosynthetic pathway for UDP-N-acetylglucosamine (UDP-GlcNAc). The C-terminal domain catalyzes the transfer of acetyl group from acetyl coenzyme A to glucosamine-1-phosphate (GlcN-1-P) to produce N-acetylglucosamine-1-phosphate (GlcNAc-1-P), which is converted into UDP-GlcNAc by the transfer of uridine 5-monophosphate (from uridine 5-triphosphate), a reaction catalyzed by the N-terminal domain. The sequence is that of Bifunctional protein GlmU from Nitratidesulfovibrio vulgaris (strain DSM 19637 / Miyazaki F) (Desulfovibrio vulgaris).